The primary structure comprises 250 residues: 3-deoxy-manno-octulosonate cytidylyltransferase (250 aa).

This sequence belongs to the KdsB family.

It localises to the cytoplasm. The enzyme catalyses 3-deoxy-alpha-D-manno-oct-2-ulosonate + CTP = CMP-3-deoxy-beta-D-manno-octulosonate + diphosphate. Its pathway is nucleotide-sugar biosynthesis; CMP-3-deoxy-D-manno-octulosonate biosynthesis; CMP-3-deoxy-D-manno-octulosonate from 3-deoxy-D-manno-octulosonate and CTP: step 1/1. It participates in bacterial outer membrane biogenesis; lipopolysaccharide biosynthesis. Its function is as follows. Activates KDO (a required 8-carbon sugar) for incorporation into bacterial lipopolysaccharide in Gram-negative bacteria. In Rhizobium meliloti (strain 1021) (Ensifer meliloti), this protein is 3-deoxy-manno-octulosonate cytidylyltransferase.